Reading from the N-terminus, the 233-residue chain is Large ribosomal subunit protein uL3 (233 aa).

It belongs to the universal ribosomal protein uL3 family. As to quaternary structure, part of the 50S ribosomal subunit. Forms a cluster with proteins L14 and L19.

In terms of biological role, one of the primary rRNA binding proteins, it binds directly near the 3'-end of the 23S rRNA, where it nucleates assembly of the 50S subunit. This chain is Large ribosomal subunit protein uL3, found in Ureaplasma parvum serovar 3 (strain ATCC 27815 / 27 / NCTC 11736).